A 327-amino-acid polypeptide reads, in one-letter code: Vacuolar protein sorting-associated protein 26A (327 aa).

Positions 306–327 are disordered; sequence RTNFHQRFESPDSQASAEQPEM. Phosphoserine is present on serine 315. Positions 316–327 are enriched in polar residues; that stretch reads PDSQASAEQPEM.

It belongs to the VPS26 family. As to quaternary structure, component of the heterotrimeric retromer cargo-selective complex (CSC), also described as vacuolar protein sorting subcomplex (VPS), formed by VPS26 (VPS26A or VPS26B), VPS29 and VPS35. The CSC has a highly elongated structure with VPS26 and VPS29 binding independently at opposite distal ends of VPS35 as central platform. The CSC is believed to associate with variable sorting nexins to form functionally distinct retromer complex variants. The originally described retromer complex (also called SNX-BAR retromer) is a pentamer containing the CSC and a heterodimeric membrane-deforming subcomplex formed between SNX1 or SNX2 and SNX5 or SNX6 (also called SNX-BAR subcomplex); the respective CSC and SNX-BAR subcomplexes associate with low affinity. The CSC associates with SNX3 to form a SNX3-retromer complex. The CSC associates with SNX27, the WASH complex and the SNX-BAR subcomplex to form the SNX27-retromer complex. Interacts with VPS29, VPS35, SNX27. Interacts with SNX1, SNX2, SNX5, SNX6, SNX3, RAB7A, ECPAS, EHD1, WASHC5, SORL1.

The protein localises to the cytoplasm. It is found in the endosome membrane. It localises to the early endosome. Its function is as follows. Acts as a component of the retromer cargo-selective complex (CSC). The CSC is believed to be the core functional component of retromer or respective retromer complex variants acting to prevent missorting of selected transmembrane cargo proteins into the lysosomal degradation pathway. The recruitment of the CSC to the endosomal membrane involves RAB7A and SNX3. The SNX-BAR retromer mediates retrograde transport of cargo proteins from endosomes to the trans-Golgi network (TGN) and is involved in endosome-to-plasma membrane transport for cargo protein recycling. The SNX3-retromer mediates the retrograde endosome-to-TGN transport of WLS distinct from the SNX-BAR retromer pathway. The SNX27-retromer is believed to be involved in endosome-to-plasma membrane trafficking and recycling of a broad spectrum of cargo proteins. The CSC complex seems to act as recruitment hub for other proteins, such as the WASH complex and TBC1D5. Required for retrograde transport of lysosomal enzyme receptor IGF2R. Required to regulate transcytosis of the polymeric immunoglobulin receptor (pIgR-pIgA). Required for the endosomal localization of WASHC2 (indicative for the WASH complex). Required for the endosomal localization of TBC1D5. Mediates retromer cargo recognition of SORL1 and is involved in trafficking of SORL1 implicated in sorting and processing of APP. Involved in retromer-independent lysosomal sorting of F2R. Involved in recycling of ADRB2. Acts redundantly with VSP26B in SNX-27 mediated endocytic recycling of SLC2A1/GLUT1. Enhances the affinity of SNX27 for PDZ-binding motifs in cargo proteins. This Mus musculus (Mouse) protein is Vacuolar protein sorting-associated protein 26A (Vps26a).